Here is a 377-residue protein sequence, read N- to C-terminus: Succinyl-diaminopimelate desuccinylase (377 aa).

Residue His-68 coordinates Zn(2+). Asp-70 is a catalytic residue. Zn(2+) is bound at residue Asp-101. Glu-135 acts as the Proton acceptor in catalysis. Residues Glu-136, Glu-164, and His-350 each contribute to the Zn(2+) site.

Belongs to the peptidase M20A family. DapE subfamily. In terms of assembly, homodimer. It depends on Zn(2+) as a cofactor. The cofactor is Co(2+).

The catalysed reaction is N-succinyl-(2S,6S)-2,6-diaminopimelate + H2O = (2S,6S)-2,6-diaminopimelate + succinate. The protein operates within amino-acid biosynthesis; L-lysine biosynthesis via DAP pathway; LL-2,6-diaminopimelate from (S)-tetrahydrodipicolinate (succinylase route): step 3/3. Catalyzes the hydrolysis of N-succinyl-L,L-diaminopimelic acid (SDAP), forming succinate and LL-2,6-diaminopimelate (DAP), an intermediate involved in the bacterial biosynthesis of lysine and meso-diaminopimelic acid, an essential component of bacterial cell walls. This is Succinyl-diaminopimelate desuccinylase from Aliivibrio fischeri (strain ATCC 700601 / ES114) (Vibrio fischeri).